The chain runs to 113 residues: Large ribosomal subunit protein uL22 (113 aa).

It belongs to the universal ribosomal protein uL22 family. Part of the 50S ribosomal subunit.

Its function is as follows. This protein binds specifically to 23S rRNA; its binding is stimulated by other ribosomal proteins, e.g. L4, L17, and L20. It is important during the early stages of 50S assembly. It makes multiple contacts with different domains of the 23S rRNA in the assembled 50S subunit and ribosome. Functionally, the globular domain of the protein is located near the polypeptide exit tunnel on the outside of the subunit, while an extended beta-hairpin is found that lines the wall of the exit tunnel in the center of the 70S ribosome. The protein is Large ribosomal subunit protein uL22 of Solibacter usitatus (strain Ellin6076).